The primary structure comprises 303 residues: Probable cell division protein WhiA (303 aa).

The segment at residues 272-303 is a DNA-binding region (H-T-H motif); that stretch reads SIQQVADALEFPITKSGVNHRLRKINKIADDL.

Belongs to the WhiA family.

Involved in cell division and chromosome segregation. This chain is Probable cell division protein WhiA, found in Streptococcus pyogenes serotype M3 (strain ATCC BAA-595 / MGAS315).